The sequence spans 365 residues: Putrescine carbamoyltransferase (365 aa).

Carbamoyl phosphate contacts are provided by residues 54 to 58, arginine 105, and histidine 132; that span reads STRTR. 277–280 is a putrescine binding site; the sequence is HCLP.

Belongs to the aspartate/ornithine carbamoyltransferase superfamily. PTCase family. In terms of assembly, homotrimer.

It is found in the cytoplasm. The enzyme catalyses carbamoyl phosphate + putrescine = N-carbamoylputrescine + phosphate + H(+). Its pathway is amine and polyamine biosynthesis; putrescine biosynthesis via agmatine pathway; putrescine from N-carbamoylputrescine (transferase route): step 1/1. In terms of biological role, catalyzes the phosphorolysis of N-carbamoylputrescine to form carbamoyl phosphate and putrescine. Is involved in the degradation pathway of the polyamine agmatine. In Mycoplasma mycoides subsp. mycoides SC (strain CCUG 32753 / NCTC 10114 / PG1), this protein is Putrescine carbamoyltransferase.